Here is a 415-residue protein sequence, read N- to C-terminus: ATP-dependent Clp protease ATP-binding subunit ClpX (415 aa).

The ClpX-type ZB domain maps to 1–53 (MLRSKGDLVLGCSFCGKKEDERRRIVTGHGVSICNYCVERCAEYLRDRKPSAL). Zn(2+) contacts are provided by cysteine 12, cysteine 15, cysteine 34, and cysteine 37. 118–125 (PTGSGKTL) is an ATP binding site.

Belongs to the ClpX chaperone family. Component of the ClpX-ClpP complex. Forms a hexameric ring that, in the presence of ATP, binds to fourteen ClpP subunits assembled into a disk-like structure with a central cavity, resembling the structure of eukaryotic proteasomes.

ATP-dependent specificity component of the Clp protease. It directs the protease to specific substrates. Can perform chaperone functions in the absence of ClpP. The protein is ATP-dependent Clp protease ATP-binding subunit ClpX of Treponema pallidum (strain Nichols).